The following is a 320-amino-acid chain: NAC domain-containing protein 18 (320 aa).

The interval 1–22 (MESTDSSGGPPPPQPNLPPGFR) is disordered. A compositionally biased stretch (pro residues) spans 9 to 18 (GPPPPQPNLP). Positions 17-177 (LPPGFRFHPT…DWVLCRIYKK (161 aa)) constitute an NAC domain. Residues 118–183 (VGVKKALVFY…IYKKNNSTAS (66 aa)) mediate DNA binding.

Restricted primarily to the region of the embryo including the SAM. Expressed in the outer integument, but seems not expressed in the embryo at the torpedo stage.

It localises to the nucleus. Its function is as follows. May encode a transcription factor involved in the elaboration of shoot apical meristems (SAM). Together with NAC056/NARS1, regulates embryogenesis by regulating the development and degeneration of ovule integuments, a process required for intertissue communication between the embryo and the maternal integument. This chain is NAC domain-containing protein 18 (NAC018), found in Arabidopsis thaliana (Mouse-ear cress).